A 308-amino-acid polypeptide reads, in one-letter code: Mitochondrial brown fat uncoupling protein 1 (308 aa).

The Mitochondrial intermembrane portion of the chain corresponds to 1–10 (MVASAEADVP). Residues 11–33 (PPTMLVKIASAGLSACLADIITF) traverse the membrane as a helical segment. 3 Solcar repeats span residues 11–103 (PPTM…VQEY), 112–202 (ATLG…LKEA), and 211–296 (DDIP…LKKE). The Mitochondrial matrix segment spans residues 34 to 74 (PLDTAKVRLQVQGERPNAPGVKYKGVLGTIATVAKTEGPLK). Lys-57 provides a ligand contact to fatty acid 16:0. Residues 75-97 (LYGGLPAGIQRQISFASLRIGLY) traverse the membrane as a helical segment. Residues 98 to 117 (DTVQEYFNAHRKTPATLGNK) are Mitochondrial intermembrane-facing. A helical transmembrane segment spans residues 118–134 (ISAGLMTGCVTVFIGQP). Residues 135–179 (TEVAKVRMQAQSSLHWLKPRYSGTYNAYYVIVKTEGFLGLWKGTS) are Mitochondrial matrix-facing. A helical transmembrane segment spans residues 180 to 196 (LNLTRNVIINCTELVVY). The Mitochondrial intermembrane segment spans residues 197–213 (DVLKEALVKNNVLADDI). The chain crosses the membrane as a helical span at residues 214-233 (PCHLLAALTAGFCTTALASP). Over 234–267 (VDVVKTRFINSPPGYYPHVHNCALNMLQKEGLRA) the chain is Mitochondrial matrix. The residue at position 255 (Cys-255) is a Cysteine sulfenic acid (-SOH). A helical membrane pass occupies residues 268-290 (FFKGFVPSFLRLGSWTVIMHVTF). Lys-270 serves as a coordination point for fatty acid 16:0. Residues 291–308 (EQLKKELMKSRQTVDCAT) are Mitochondrial intermembrane-facing.

Belongs to the mitochondrial carrier (TC 2.A.29) family. As to quaternary structure, most probably functions as a monomer. Binds one purine nucleotide per monomer. However, has also been suggested to function as a homodimer or a homotetramer. Tightly associates with cardiolipin in the mitochondrion inner membrane; may stabilize and regulate its activity. In terms of processing, may undergo sulfenylation upon cold exposure. May increase the sensitivity of UCP1 thermogenic function to the activation by noradrenaline probably through structural effects. May undergo ubiquitin-mediated proteasomal degradation. Brown adipose tissue.

It is found in the mitochondrion inner membrane. It carries out the reaction H(+)(in) = H(+)(out). With respect to regulation, has no constitutive proton transporter activity and has to be activated by long-chain fatty acids/LCFAs. Inhibited by purine nucleotides. Both purine nucleotides and LCFAs bind the cytosolic side of the transporter and directly compete to activate or inhibit it. Activated by noradrenaline and reactive oxygen species. Despite lacking canonical translational encoding for selenocysteine, a small pool of the protein has been observed to selectively incorporate selenocysteine at 'Cys-255'. Selenocysteine-modified protein is highly sensitive to redox modification and may constitute a pool of protein highly sensitive to activation by elevated levels of reactive oxygen species (ROS). In terms of biological role, mitochondrial protein responsible for thermogenic respiration, a specialized capacity of brown adipose tissue and beige fat that participates in non-shivering adaptive thermogenesis to temperature and diet variations and more generally to the regulation of energy balance. Functions as a long-chain fatty acid/LCFA and proton symporter, simultaneously transporting one LCFA and one proton through the inner mitochondrial membrane. However, LCFAs remaining associated with the transporter via their hydrophobic tails, it results in an apparent transport of protons activated by LCFAs. Thereby, dissipates the mitochondrial proton gradient and converts the energy of substrate oxydation into heat instead of ATP. Regulates the production of reactive oxygen species/ROS by mitochondria. The protein is Mitochondrial brown fat uncoupling protein 1 of Suncus murinus (Asian house shrew).